Here is a 159-residue protein sequence, read N- to C-terminus: Cyclic pyranopterin monophosphate synthase (159 aa).

Substrate contacts are provided by residues 76-78 (LCH) and 114-115 (ME). Aspartate 129 is a catalytic residue.

It belongs to the MoaC family. As to quaternary structure, homohexamer; trimer of dimers.

The catalysed reaction is (8S)-3',8-cyclo-7,8-dihydroguanosine 5'-triphosphate = cyclic pyranopterin phosphate + diphosphate. Its pathway is cofactor biosynthesis; molybdopterin biosynthesis. In terms of biological role, catalyzes the conversion of (8S)-3',8-cyclo-7,8-dihydroguanosine 5'-triphosphate to cyclic pyranopterin monophosphate (cPMP). The protein is Cyclic pyranopterin monophosphate synthase of Shewanella oneidensis (strain ATCC 700550 / JCM 31522 / CIP 106686 / LMG 19005 / NCIMB 14063 / MR-1).